The chain runs to 281 residues: Large ribosomal subunit protein uL22 (281 aa).

Residues 1–225 (MASPMGSTAS…KAGGAAEAEV (225 aa)) form a large ribosomal subunit protein uL22 region. 2 disordered regions span residues 137-175 (RATK…PVAA) and 199-281 (AVAS…GGTR). Basic residues predominate over residues 139 to 153 (TKKAVPKGARHRRRL). Composition is skewed to low complexity over residues 159–175 (PAAS…PVAA) and 199–239 (AVAS…APAA). The interval 226-281 (ATTDEQTTETAPAAEAEKPAVRRPAARKSTTSARRRAAETEGHDSDAESTDEGGTR) is unknown. A compositionally biased stretch (basic and acidic residues) spans 261–271 (RAAETEGHDSD). The span at 272 to 281 (AESTDEGGTR) shows a compositional bias: acidic residues.

This sequence belongs to the universal ribosomal protein uL22 family. As to quaternary structure, part of the 50S ribosomal subunit.

Its function is as follows. The globular domain of the protein is located near the polypeptide exit tunnel on the outside of the subunit, while an extended beta-hairpin is found that lines the wall of the exit tunnel in the center of the 70S ribosome. Functionally, this protein binds specifically to 23S rRNA; its binding is stimulated by other ribosomal proteins, e.g. L4, L17, and L20. It is important during the early stages of 50S assembly. It makes multiple contacts with different domains of the 23S rRNA in the assembled 50S subunit and ribosome. This is Large ribosomal subunit protein uL22 from Acidothermus cellulolyticus (strain ATCC 43068 / DSM 8971 / 11B).